Here is a 385-residue protein sequence, read N- to C-terminus: DNA replication and repair protein RecF (385 aa).

30-37 lines the ATP pocket; sequence GANAAGKT.

The protein belongs to the RecF family.

It is found in the cytoplasm. Its function is as follows. The RecF protein is involved in DNA metabolism; it is required for DNA replication and normal SOS inducibility. RecF binds preferentially to single-stranded, linear DNA. It also seems to bind ATP. This Herpetosiphon aurantiacus (strain ATCC 23779 / DSM 785 / 114-95) protein is DNA replication and repair protein RecF.